We begin with the raw amino-acid sequence, 879 residues long: JmjC domain-containing histone demethylation protein 1 (879 aa).

Disordered regions lie at residues 1–45 (MSEQ…EEGK), 117–212 (STSP…PKRK), and 407–449 (KDVK…EGLK). A PHD-type zinc finger spans residues 23–116 (PEPCPLCRET…KWYCAPCLAR (94 aa)). 2 stretches are compositionally biased toward basic and acidic residues: residues 183–192 (IDMKSEREQQ) and 407–433 (KDVK…HLTE). A JmjC domain is found at 416 to 598 (NDSRESSEIR…TQLRLRQIEI (183 aa)). Substrate is bound at residue threonine 472. Residues histidine 475 and aspartate 477 each contribute to the Fe cation site. Lysine 492 serves as a coordination point for substrate. Residue histidine 566 participates in Fe cation binding. Positions 763 to 879 (HPPAWSENRQ…KVEEDMDIDH (117 aa)) are disordered. The segment covering 769 to 782 (ENRQSPQIETTTVQ) has biased composition (polar residues). Residues 786-818 (PSTSSSDAISGSGPGASPGASANGGANENEQAE) show a composition bias toward low complexity. Residues 848–864 (FVEKKTVWGPKLDKEKI) show a composition bias toward basic and acidic residues.

This sequence belongs to the JHDM1 histone demethylase family. The cofactor is Fe(2+).

The protein localises to the nucleus. The enzyme catalyses N(6),N(6)-dimethyl-L-lysyl(36)-[histone H3] + 2 2-oxoglutarate + 2 O2 = L-lysyl(36)-[histone H3] + 2 formaldehyde + 2 succinate + 2 CO2. Functionally, histone demethylase that specifically demethylates 'Lys-36' of histone H3, thereby playing a central role in histone code. The chain is JmjC domain-containing histone demethylation protein 1 (JHD1) from Cryptococcus neoformans var. neoformans serotype D (strain B-3501A) (Filobasidiella neoformans).